The chain runs to 492 residues: ATP synthase subunit beta, chloroplastic (492 aa).

170 to 177 (GGAGVGKT) provides a ligand contact to ATP.

It belongs to the ATPase alpha/beta chains family. As to quaternary structure, F-type ATPases have 2 components, CF(1) - the catalytic core - and CF(0) - the membrane proton channel. CF(1) has five subunits: alpha(3), beta(3), gamma(1), delta(1), epsilon(1). CF(0) has four main subunits: a(1), b(1), b'(1) and c(9-12).

It is found in the plastid. Its subcellular location is the chloroplast thylakoid membrane. It carries out the reaction ATP + H2O + 4 H(+)(in) = ADP + phosphate + 5 H(+)(out). Functionally, produces ATP from ADP in the presence of a proton gradient across the membrane. The catalytic sites are hosted primarily by the beta subunits. This is ATP synthase subunit beta, chloroplastic from Psilotum nudum (Whisk fern).